A 340-amino-acid chain; its full sequence is Glyceraldehyde-3-phosphate dehydrogenase (340 aa).

Residues 11 to 12 (TI) and G109 contribute to the NAD(+) site. Residue 138 to 140 (SCN) participates in D-glyceraldehyde 3-phosphate binding. Residue C139 is the Nucleophile of the active site. R167 is an NAD(+) binding site. 193-194 (HA) lines the D-glyceraldehyde 3-phosphate pocket. Residue Q300 coordinates NAD(+).

Belongs to the glyceraldehyde-3-phosphate dehydrogenase family. As to quaternary structure, homotetramer.

Its subcellular location is the cytoplasm. The enzyme catalyses D-glyceraldehyde 3-phosphate + phosphate + NADP(+) = (2R)-3-phospho-glyceroyl phosphate + NADPH + H(+). It carries out the reaction D-glyceraldehyde 3-phosphate + phosphate + NAD(+) = (2R)-3-phospho-glyceroyl phosphate + NADH + H(+). Its pathway is carbohydrate degradation; glycolysis; pyruvate from D-glyceraldehyde 3-phosphate: step 1/5. The sequence is that of Glyceraldehyde-3-phosphate dehydrogenase from Saccharolobus islandicus (strain L.S.2.15 / Lassen #1) (Sulfolobus islandicus).